The following is a 646-amino-acid chain: Choline transporter-like protein 1 (646 aa).

Residues 1 to 27 lie on the Cytoplasmic side of the membrane; the sequence is MGCCGCGSEEGSVRQWKPLEQRSCTDV. Residues 28–48 form a helical membrane-spanning segment; that stretch reads LWLLIFVLFCIGMAIICGFAI. Residues 49–207 lie on the Extracellular side of the membrane; sequence ASGAAQRLVF…RVITGVMTSK (159 aa). N-linked (GlcNAc...) asparagine glycosylation occurs at Asn133. The chain crosses the membrane as a helical span at residues 208–228; it reads EIIVGLCLMSLVLSILLMVII. Topologically, residues 229–233 are cytoplasmic; that stretch reads RYISK. Residues 234–254 traverse the membrane as a helical segment; the sequence is VLVWILAILTIIGSIGGTAVL. The Extracellular portion of the chain corresponds to 255–281; sequence WWLYADHKKTLKLDPSQGDVAADNVTA. Asn278 carries an N-linked (GlcNAc...) asparagine glycan. Residues 282–302 form a helical membrane-spanning segment; sequence LLVCAIIATVITVILLLLMLI. Residues 303-308 are Cytoplasmic-facing; the sequence is MRKRVA. The chain crosses the membrane as a helical span at residues 309–329; the sequence is LTIALFHVAGKVFIHIPFLIF. Residues 330–331 lie on the Extracellular side of the membrane; that stretch reads QS. Residues 332–352 form a helical membrane-spanning segment; sequence LWTFLALAFFWIYWIAVLLLL. Over 353-373 the chain is Cytoplasmic; it reads ATAGYPQKKDQGYVEFKVSGP. The chain crosses the membrane as a helical span at residues 374–394; sequence LQYTWIYHLVGLIWISEFILA. Residues 395–435 lie on the Extracellular side of the membrane; it reads CQQMTIAGAVVTYYFTRDKHNLPATPILASMCRLIKYHLGT. The chain crosses the membrane as a helical span at residues 436–456; sequence VAKGSFIITLIKIPQMILVYI. At 457-530 the chain is on the cytoplasmic side; that stretch reads HSQLKGKENA…RVAAINTVGD (74 aa). A helical membrane pass occupies residues 531 to 551; sequence FVLFLGKLLIVLVTGFVGIIL. The Extracellular portion of the chain corresponds to 552–559; the sequence is LNYQRDYT. A helical transmembrane segment spans residues 560-580; the sequence is VWVLPLIIICLFAFFVSHCFL. At 581–646 the chain is on the cytoplasmic side; the sequence is SIYEMVVDVL…KSMASGSDNA (66 aa).

Belongs to the CTL (choline transporter-like) family. Present in myelinated structures from brain and spinal cord (at protein level).

Its subcellular location is the cell membrane. The protein resides in the mitochondrion outer membrane. The enzyme catalyses choline(out) + n H(+)(in) = choline(in) + n H(+)(out). The catalysed reaction is ethanolamine(out) + n H(+)(in) = ethanolamine(in) + n H(+)(out). Functionally, probable choline transporter. May be involved in membrane synthesis and myelin production. This chain is Choline transporter-like protein 1 (slc44a1), found in Torpedo marmorata (Marbled electric ray).